The chain runs to 485 residues: Putative phosphoethanolamine transferase HI_1064 (485 aa).

Helical transmembrane passes span 33 to 53, 55 to 75, 81 to 101, and 125 to 145; these read ILPA…ILIG, GMFT…ILLL, SFYF…PTGL, and FLLQ…ILIF.

This sequence belongs to the phosphoethanolamine transferase family.

The protein resides in the cell membrane. This Haemophilus influenzae (strain ATCC 51907 / DSM 11121 / KW20 / Rd) protein is Putative phosphoethanolamine transferase HI_1064.